Here is a 122-residue protein sequence, read N- to C-terminus: Large ribosomal subunit protein uL14 (122 aa).

Belongs to the universal ribosomal protein uL14 family. Part of the 50S ribosomal subunit. Forms a cluster with proteins L3 and L19. In the 70S ribosome, L14 and L19 interact and together make contacts with the 16S rRNA in bridges B5 and B8.

Functionally, binds to 23S rRNA. Forms part of two intersubunit bridges in the 70S ribosome. The sequence is that of Large ribosomal subunit protein uL14 from Clostridioides difficile (strain 630) (Peptoclostridium difficile).